A 98-amino-acid chain; its full sequence is MARSIKKGPFADKHLTKKVEDANKGNKKSVIKTWSRRSTILPDFVGHTFAVHNGRKFVPVFVTENMVGHKLGEFAPTRTFHGHSAEKKAAAAPGPAKK.

2 disordered regions span residues 1–30 (MARSIKKGPFADKHLTKKVEDANKGNKKSV) and 78–98 (RTFHGHSAEKKAAAAPGPAKK). Positions 9 to 24 (PFADKHLTKKVEDANK) are enriched in basic and acidic residues.

This sequence belongs to the universal ribosomal protein uS19 family.

In terms of biological role, protein S19 forms a complex with S13 that binds strongly to the 16S ribosomal RNA. The polypeptide is Small ribosomal subunit protein uS19 (Anaeromyxobacter dehalogenans (strain 2CP-C)).